Consider the following 507-residue polypeptide: Putative pentatricopeptide repeat-containing protein At3g16710, mitochondrial (507 aa).

A mitochondrion-targeting transit peptide spans 1 to 48 (MRRSIATGFASIVKGFHLHSHRHRLQISNPRTAASLSLCGFCFWIRAF). PPR repeat units lie at residues 47-81 (AFSS…RPLP), 82-116 (SIID…GIPP), 117-151 (LLCT…GFEP), 152-186 (DLVT…GFKP), 187-221 (NVVT…GSRP), 222-256 (NVVT…RIEP), 257-291 (NVIT…SVYP), 292-326 (DVFT…GCYP), 327-361 (NEVI…GVVA), 362-396 (NTIT…RAPP), 397-431 (DIRT…EMDI), 432-466 (NIVT…GMKP), and 467-501 (NVIT…GFLP).

Belongs to the PPR family. P subfamily.

Its subcellular location is the mitochondrion. This chain is Putative pentatricopeptide repeat-containing protein At3g16710, mitochondrial, found in Arabidopsis thaliana (Mouse-ear cress).